The sequence spans 130 residues: Small ribosomal subunit protein uS11c (130 aa).

It belongs to the universal ribosomal protein uS11 family. Part of the 30S ribosomal subunit.

The protein localises to the plastid. The polypeptide is Small ribosomal subunit protein uS11c (Aneura mirabilis (Parasitic liverwort)).